We begin with the raw amino-acid sequence, 89 residues long: UPF0297 protein OB2008 (89 aa).

This sequence belongs to the UPF0297 family.

This Oceanobacillus iheyensis (strain DSM 14371 / CIP 107618 / JCM 11309 / KCTC 3954 / HTE831) protein is UPF0297 protein OB2008.